An 847-amino-acid polypeptide reads, in one-letter code: Nitrite reductase (NADH) large subunit (847 aa).

An FAD-binding site is contributed by 44–79 (YDRVHLSSYFSHHTAEELSLVREGFYEKHGIKVLVG). 193–225 (LRRKIESMGVRVHTSKNTLEIVQEGVEARKTMR) is a binding site for NAD(+). [2Fe-2S] cluster-binding residues include Cys-425, Cys-427, Cys-459, and Cys-462. Cys-641, Cys-647, Cys-681, and Cys-685 together coordinate [4Fe-4S] cluster. Cys-685 lines the siroheme pocket.

Belongs to the nitrite and sulfite reductase 4Fe-4S domain family. Homodimer which associates with NirD. The cofactor is siroheme. [2Fe-2S] cluster is required as a cofactor. It depends on [4Fe-4S] cluster as a cofactor. Requires FAD as cofactor.

The enzyme catalyses NH4(+) + 3 NAD(+) + 2 H2O = nitrite + 3 NADH + 5 H(+). The protein operates within nitrogen metabolism; nitrate reduction (assimilation). This Escherichia coli (strain K12) protein is Nitrite reductase (NADH) large subunit (nirB).